A 369-amino-acid chain; its full sequence is Serine proteinase inhibitor 1 (369 aa).

It belongs to the serpin family. Poxviruses subfamily.

Important in virulence. This Oryctolagus cuniculus (Rabbit) protein is Serine proteinase inhibitor 1 (SPI-1).